A 791-amino-acid chain; its full sequence is Putative inactive tyrosine-protein kinase Wsck (791 aa).

The first 26 residues, 1–26 (MECGSHSGHRPIPIWLSSCLVAMCLG), serve as a signal peptide directing secretion. Over 27-401 (LPLGAAVPQE…YATFEKGQSS (375 aa)) the chain is Extracellular. Residues 39-125 (AYYYVGCYTA…VGVHSYYSTI (87 aa)) enclose the WSC domain. One can recognise a Fibronectin type-III domain in the interval 131-246 (GPHHLRISNK…ASIEATTEVG (116 aa)). Residues asparagine 139, asparagine 217, and asparagine 329 are each glycosylated (N-linked (GlcNAc...) asparagine). The chain crosses the membrane as a helical span at residues 402–422 (VVALAVTCVIFGSCLLLSLIA). The Cytoplasmic portion of the chain corresponds to 423–791 (YFYLRYKTCR…PQLEAVATMG (369 aa)). The Protein kinase domain occupies 493–758 (LNVNDVIGDG…DVAFGVRQLM (266 aa)). 499-507 (IGDGRFGEI) is an ATP binding site.

This sequence belongs to the protein kinase superfamily. Tyr protein kinase family.

The protein resides in the membrane. In terms of biological role, probably lacks tyrosine-protein kinase activity. In Drosophila melanogaster (Fruit fly), this protein is Putative inactive tyrosine-protein kinase Wsck.